Here is a 207-residue protein sequence, read N- to C-terminus: Small ribosomal subunit protein uS4 (207 aa).

The interval 31–54 (KCKLDSKPGQHGRTSGARTSDYGN) is disordered. The segment covering 42–53 (GRTSGARTSDYG) has biased composition (polar residues). In terms of domain architecture, S4 RNA-binding spans 97–160 (SRLDNVVYRM…KKQVRIAEAL (64 aa)).

This sequence belongs to the universal ribosomal protein uS4 family. As to quaternary structure, part of the 30S ribosomal subunit. Contacts protein S5. The interaction surface between S4 and S5 is involved in control of translational fidelity.

In terms of biological role, one of the primary rRNA binding proteins, it binds directly to 16S rRNA where it nucleates assembly of the body of the 30S subunit. With S5 and S12 plays an important role in translational accuracy. In Cupriavidus metallidurans (strain ATCC 43123 / DSM 2839 / NBRC 102507 / CH34) (Ralstonia metallidurans), this protein is Small ribosomal subunit protein uS4.